The sequence spans 507 residues: Eukaryotic translation initiation factor 4E-binding protein Mextli homolog (507 aa).

Positions 126 to 163 are disordered; it reads RPEGQHDPAPTVGIPPSATSPPTQVTSSVTSPVPSSPQ. The segment covering 140-158 has biased composition (low complexity); it reads PPSATSPPTQVTSSVTSPV. One can recognise a KH domain in the interval 242–307; the sequence is QLRHEMIIRN…EDIERAKDMI (66 aa). Disordered regions lie at residues 314–360 and 395–424; these read NMSP…DEDI and ARPS…QQEP. A compositionally biased stretch (polar residues) spans 329 to 348; the sequence is QYSGMSSENQSIPSQQNTAN. Over residues 349–360 the composition is skewed to acidic residues; sequence IDEDDDDDDEDI.

In terms of assembly, interacts with eukaryotic translation initiation factor ife-3.

The protein resides in the cytoplasm. Its function is as follows. Plays a role in promoting translation. The sequence is that of Eukaryotic translation initiation factor 4E-binding protein Mextli homolog from Caenorhabditis elegans.